We begin with the raw amino-acid sequence, 398 residues long: Enoyl-[acyl-carrier-protein] reductase [NADH] (398 aa).

Residues 48–53, 74–75, 111–112, and 139–140 each bind NAD(+); these read GSSTGY, FE, DA, and LA. Y225 is a binding site for substrate. Residue Y235 is the Proton donor of the active site. Residues K244 and 273–275 each bind NAD(+); that span reads VVT.

It belongs to the TER reductase family. As to quaternary structure, monomer.

It catalyses the reaction a 2,3-saturated acyl-[ACP] + NAD(+) = a (2E)-enoyl-[ACP] + NADH + H(+). It participates in lipid metabolism; fatty acid biosynthesis. In terms of biological role, involved in the final reduction of the elongation cycle of fatty acid synthesis (FAS II). Catalyzes the reduction of a carbon-carbon double bond in an enoyl moiety that is covalently linked to an acyl carrier protein (ACP). The polypeptide is Enoyl-[acyl-carrier-protein] reductase [NADH] (Pseudomonas paraeruginosa (strain DSM 24068 / PA7) (Pseudomonas aeruginosa (strain PA7))).